A 261-amino-acid polypeptide reads, in one-letter code: Hydroxyethylthiazole kinase (261 aa).

Residue M38 coordinates substrate. ATP contacts are provided by R114 and T159. Residue G186 coordinates substrate.

The protein belongs to the Thz kinase family. Requires Mg(2+) as cofactor.

The catalysed reaction is 5-(2-hydroxyethyl)-4-methylthiazole + ATP = 4-methyl-5-(2-phosphooxyethyl)-thiazole + ADP + H(+). The protein operates within cofactor biosynthesis; thiamine diphosphate biosynthesis; 4-methyl-5-(2-phosphoethyl)-thiazole from 5-(2-hydroxyethyl)-4-methylthiazole: step 1/1. Its function is as follows. Catalyzes the phosphorylation of the hydroxyl group of 4-methyl-5-beta-hydroxyethylthiazole (THZ). The protein is Hydroxyethylthiazole kinase of Halalkalibacterium halodurans (strain ATCC BAA-125 / DSM 18197 / FERM 7344 / JCM 9153 / C-125) (Bacillus halodurans).